The primary structure comprises 411 residues: MLLFLLRRIFDCRYKYKLFVKALVLFLTIVYNAGLVHFFFRTTSLDDSPEMNHVDYVAHVIVMPIVLSIGMINQCLNVCTLLHIRTSIFLYLKASAIADILSIVAFIPFLFRHAKLIDPSWELGMFYHAHLELPLINALISASALNIVAMTVDRYVSVCHPIKFFQNNETKPSRRRTMLIIVMIYFIALMIYFPSVFQKKLGVVTDALTNKTIYTIVRNEDVEALQVFKFYLIVRECICRWGPVLLLVILNMCVVRGLRKIDKRNWFWRQPSQNSRTETLAQRQLRSPRDDRSRISVLLFVTSATFIICNIPASVISFFVRRVSGSLFWQIFRAIANLLQVTSYLYNFYLYALCSSEYRHAFLRLFGCRSSLSPTSTGDSPTVRVSVHGKRCHQAVVLLGNENHENPVDEV.

Over 1–18 (MLLFLLRRIFDCRYKYKL) the chain is Cytoplasmic. Residues 19-39 (FVKALVLFLTIVYNAGLVHFF) traverse the membrane as a helical segment. Residues 40-55 (FRTTSLDDSPEMNHVD) are Extracellular-facing. A helical transmembrane segment spans residues 56–76 (YVAHVIVMPIVLSIGMINQCL). Topologically, residues 77–87 (NVCTLLHIRTS) are cytoplasmic. The helical transmembrane segment at 88–108 (IFLYLKASAIADILSIVAFIP) threads the bilayer. Residues 109–131 (FLFRHAKLIDPSWELGMFYHAHL) are Extracellular-facing. A helical transmembrane segment spans residues 132-152 (ELPLINALISASALNIVAMTV). The Cytoplasmic portion of the chain corresponds to 153–176 (DRYVSVCHPIKFFQNNETKPSRRR). The helical transmembrane segment at 177–197 (TMLIIVMIYFIALMIYFPSVF) threads the bilayer. The Extracellular portion of the chain corresponds to 198–229 (QKKLGVVTDALTNKTIYTIVRNEDVEALQVFK). N-linked (GlcNAc...) asparagine glycosylation occurs at Asn-210. The chain crosses the membrane as a helical span at residues 230-250 (FYLIVRECICRWGPVLLLVIL). Residues 251–299 (NMCVVRGLRKIDKRNWFWRQPSQNSRTETLAQRQLRSPRDDRSRISVLL) are Cytoplasmic-facing. A helical membrane pass occupies residues 300 to 320 (FVTSATFIICNIPASVISFFV). The Extracellular segment spans residues 321 to 333 (RRVSGSLFWQIFR). Residues 334–354 (AIANLLQVTSYLYNFYLYALC) form a helical membrane-spanning segment. Residues 355-411 (SSEYRHAFLRLFGCRSSLSPTSTGDSPTVRVSVHGKRCHQAVVLLGNENHENPVDEV) lie on the Cytoplasmic side of the membrane.

The protein belongs to the G-protein coupled receptor 1 family.

The protein localises to the cell membrane. In terms of biological role, not known. Putative receptor. This Caenorhabditis elegans protein is Probable G-protein coupled receptor AH9.1.